The sequence spans 318 residues: Acetyl-coenzyme A carboxylase carboxyl transferase subunit alpha (318 aa).

The 262-residue stretch at 34 to 295 folds into the CoA carboxyltransferase C-terminal domain; the sequence is SIEEEITKLR…KATIKQQLAQ (262 aa).

Belongs to the AccA family. As to quaternary structure, acetyl-CoA carboxylase is a heterohexamer composed of biotin carboxyl carrier protein (AccB), biotin carboxylase (AccC) and two subunits each of ACCase subunit alpha (AccA) and ACCase subunit beta (AccD).

The protein localises to the cytoplasm. It catalyses the reaction N(6)-carboxybiotinyl-L-lysyl-[protein] + acetyl-CoA = N(6)-biotinyl-L-lysyl-[protein] + malonyl-CoA. It participates in lipid metabolism; malonyl-CoA biosynthesis; malonyl-CoA from acetyl-CoA: step 1/1. Component of the acetyl coenzyme A carboxylase (ACC) complex. First, biotin carboxylase catalyzes the carboxylation of biotin on its carrier protein (BCCP) and then the CO(2) group is transferred by the carboxyltransferase to acetyl-CoA to form malonyl-CoA. The polypeptide is Acetyl-coenzyme A carboxylase carboxyl transferase subunit alpha (Pseudoalteromonas atlantica (strain T6c / ATCC BAA-1087)).